The primary structure comprises 415 residues: MFADLDYDIEEDKLGIPTVPGKVTLQKDAQNLIGISIGGGAQYCPCLYIVQVFDNTPAALDGTVAAGDEITGVNGRSIKGKTKVEVAKMIQEVKGEVTIHYNKLQADPKQGMSLDIVLKKVKHRLVENMSSGTADALGLSRAILCNDGLVKRLEELERTAELYKGMTEHTKNLLRAFYELSQTHRAFGDVFSVIGVREPQPAASEAFVKFADAHRSIEKFGIRLLKTIKPMLTDLNTYLNKAIPDTRLTIKKYLDVKFEYLSYCLKVKEMDDEEYSCIALGEPLYRVSTGNYEYRLILRCRQEARARFSQMRKDVLEKMELLDQKHVQDIVFQLQRLVSTMSKYYNDCYAVLRDADVFPIEVDLAHTTLAYGLNQEEFTDGEEEEEEEDTAAGEPARDTRGAAGPLDKGGSWCDS.

Residues 22-105 enclose the PDZ domain; that stretch reads KVTLQKDAQN…EVTIHYNKLQ (84 aa). Zn(2+) contacts are provided by cysteine 44 and cysteine 46. Threonine 82 is modified (phosphothreonine). The AH domain maps to 144 to 357; it reads LCNDGLVKRL…CYAVLRDADV (214 aa). Residues 376-415 form a disordered region; that stretch reads EEFTDGEEEEEEEDTAAGEPARDTRGAAGPLDKGGSWCDS. Residues 377-391 show a composition bias toward acidic residues; it reads EFTDGEEEEEEEDTA. Cysteine 413 carries S-palmitoyl cysteine; by DHHC8 lipidation.

Monomer and homodimer. Interacts with CXADR. Interacts presynaptically with the glutamate receptors GRIA2, GRIA3, GRIK3, isoform 3 of GRIA4, isoform A of GRM4, GRM7 and GRM8; with NAPA and NAPB; and with BTG2. The interaction with NAPA and NAPB disrupts the interaction with GRIA2, conducting to the internalization of GRIA2. Interacts with PRKCA; with the amine transporters SLC6A2 and SLC6A3; with the channels ASIC1 and ASIC2; with the GTP-binding proteins ARF1 and ARF3; with the ephrin receptor tyrosine kinases EPHA7, EPHB1 and EPHB2; with ERBB2 and through its PDZ domain with the C-terminal tail of PRLHR. Interacts with UNC5A. Interacts (via AH domain) with NCS1/FREQ; in a calcium-dependent manner. Interacts with F-actin and associates with the ARP2/3 complex. Interacts (via PDZ domain) with ARF1 (activated); the interaction blocks Arp2/3 complex inhibition. Interacts with SORCS3. Phosphorylation at Thr-82 appears to inhibit the interaction with AMPA receptors. In terms of processing, palmitoylation on Cys-413 is essential for long-term synaptic depression (LTD).

Its subcellular location is the cytoplasm. The protein localises to the perinuclear region. The protein resides in the membrane. It localises to the postsynaptic density. It is found in the synapse. Its subcellular location is the synaptosome. The protein localises to the cytoskeleton. Its function is as follows. Probable adapter protein that bind to and organize the subcellular localization of a variety of membrane proteins containing some PDZ recognition sequence. Involved in the clustering of various receptors, possibly by acting at the receptor internalization level. Plays a role in synaptic plasticity by regulating the trafficking and internalization of AMPA receptors. May be regulated upon PRKCA activation. May regulate ASIC1/ASIC3 channel. Regulates actin polymerization by inhibiting the actin-nucleating activity of the Arp2/3 complex; the function is competitive with nucleation promoting factors and is linked to neuronal morphology regulation and AMPA receptor (AMPAR) endocytosis. Via interaction with the Arp2/3 complex involved in regulation of synaptic plasicity of excitatory synapses and required for spine shrinkage during long-term depression (LTD). Involved in regulation of astrocyte morphology, antagonistic to Arp2/3 complex activator WASL/N-WASP function. In Pongo abelii (Sumatran orangutan), this protein is PRKCA-binding protein (PICK1).